The sequence spans 205 residues: Ribosomal RNA small subunit methyltransferase G (205 aa).

S-adenosyl-L-methionine-binding positions include Gly-73, Leu-78, 124–125 (VE), and Arg-139.

Belongs to the methyltransferase superfamily. RNA methyltransferase RsmG family.

Its subcellular location is the cytoplasm. The enzyme catalyses guanosine(527) in 16S rRNA + S-adenosyl-L-methionine = N(7)-methylguanosine(527) in 16S rRNA + S-adenosyl-L-homocysteine. Functionally, specifically methylates the N7 position of guanine in position 527 of 16S rRNA. In Erwinia tasmaniensis (strain DSM 17950 / CFBP 7177 / CIP 109463 / NCPPB 4357 / Et1/99), this protein is Ribosomal RNA small subunit methyltransferase G.